A 498-amino-acid polypeptide reads, in one-letter code: ATP synthase subunit beta, chloroplastic (498 aa).

An ATP-binding site is contributed by Gly172 to Thr179.

This sequence belongs to the ATPase alpha/beta chains family. F-type ATPases have 2 components, CF(1) - the catalytic core - and CF(0) - the membrane proton channel. CF(1) has five subunits: alpha(3), beta(3), gamma(1), delta(1), epsilon(1). CF(0) has four main subunits: a(1), b(1), b'(1) and c(9-12).

It localises to the plastid. The protein resides in the chloroplast thylakoid membrane. The catalysed reaction is ATP + H2O + 4 H(+)(in) = ADP + phosphate + 5 H(+)(out). Produces ATP from ADP in the presence of a proton gradient across the membrane. The catalytic sites are hosted primarily by the beta subunits. The chain is ATP synthase subunit beta, chloroplastic from Platanus occidentalis (Sycamore).